The primary structure comprises 420 residues: Inheritance of peroxisomes protein 1 (420 aa).

Residues 1–10 (MVLSRGETKK) are compositionally biased toward basic and acidic residues. 2 disordered regions span residues 1 to 75 (MVLS…QRKR) and 273 to 309 (SLSD…NYDD). Low complexity predominate over residues 30–39 (LKQSLKLSNN). A compositionally biased stretch (polar residues) spans 45 to 56 (DSTQHSNDTNKS). Ser273 is modified (phosphoserine). Residues 295–309 (NNDDDNDDDDDNYDD) show a composition bias toward acidic residues.

The protein belongs to the INP1 family. As to quaternary structure, interacts with PEX25, PEX30 and VPS1.

The protein resides in the peroxisome membrane. Functionally, required for peroxisome inheritance. The chain is Inheritance of peroxisomes protein 1 (INP1) from Saccharomyces cerevisiae (strain ATCC 204508 / S288c) (Baker's yeast).